The following is a 344-amino-acid chain: Acyl-CoA ligase clz12 (344 aa).

AMP-binding stretches follow at residues 2 to 239 (VQRS…IIKV) and 248 to 322 (ELET…PSGK).

The protein belongs to the ATP-dependent AMP-binding enzyme family.

The protein operates within secondary metabolite biosynthesis. Its function is as follows. Acyl-CoA ligase; part of the gene cluster that mediates the biosynthesis of squalestatin S1 (SQS1, also known as zaragozic acid A), a heavily oxidized fungal polyketide that offers potent cholesterol lowering activity by targeting squalene synthase (SS). SQS1 is composed of a 2,8-dioxobicyclic[3.2.1]octane-3,4,5-tricarboxyclic acid core that is connected to two lipophilic polyketide arms. These initial steps feature the priming of an unusual benzoic acid starter unit onto the highly reducing polyketide synthase clz14, followed by oxaloacetate extension and product release to generate a tricarboxylic acid containing product. The phenylalanine ammonia lyase (PAL) clz10 and the acyl-CoA ligase clz12 are involved in transforming phenylalanine into benzoyl-CoA. The citrate synthase-like protein clz17 is involved in connecting the C-alpha-carbons of the hexaketide chain and oxaloacetate to afford the tricarboxylic acid unit. The potential hydrolytic enzymes, clz11 and clz13, are in close proximity to pks2 and may participate in product release. On the other side, the tetraketide arm is synthesized by a the squalestatin tetraketide synthase clz2 and enzymatically esterified to the core in the last biosynthetic step, by the acetyltransferase clz6. The biosynthesis of the tetraketide must involve 3 rounds of chain extension. After the first and second rounds methyl-transfer occurs, and in all rounds of extension the ketoreductase and dehydratase are active. The enoyl reductase and C-MeT of clz2 are not active in the final round of extension. The acetyltransferase clz6 appears to have a broad substrate selectivity for its acyl CoA substrate, allowing the in vitro synthesis of novel squalestatins. The biosynthesis of SQS1 requires several oxidative steps likely performed by oxidoreductases clz3, clz15 and clz16. Finally, in support of the identification of the cluster as being responsible for SQS1 production, the cluster contains a gene encoding a putative squalene synthase (SS) clz20, suggesting a likely mechanism for self-resistance. The sequence is that of Acyl-CoA ligase clz12 from Cochliobolus lunatus (Filamentous fungus).